We begin with the raw amino-acid sequence, 180 residues long: MGDKKSPTRPKRQPKPSSDEGYWDCSVCTFRNSAEAFKCMMCDVRKGTSTRKPRPVSQLVAQQVTQQFVPPTQSKKEKKDKVEKEKSEKETTSKKNSHKKTRPRLKNVDRSSAQHLEVTVGDLTVIITDFKEKTKSPPASSAASADQHSQSGSSSDNTERGMSRSSSPRGEASSLNGESH.

Disordered stretches follow at residues 1–24 (MGDK…GYWD), 47–120 (GTST…EVTV), and 132–180 (EKTK…GESH). A RanBP2-type zinc finger spans residues 19-48 (DEGYWDCSVCTFRNSAEAFKCMMCDVRKGT). Over residues 62-73 (QQVTQQFVPPTQ) the composition is skewed to low complexity. Residues 74-93 (SKKEKKDKVEKEKSEKETTS) are compositionally biased toward basic and acidic residues. Basic residues predominate over residues 95 to 105 (KNSHKKTRPRL). Low complexity-rich tracts occupy residues 136-156 (SPPA…SSSD) and 163-174 (SRSSSPRGEASS). S167 bears the Phosphoserine mark.

As to quaternary structure, interacts with MYC, MYCN, RNF2/RING1B and YY1. Part of the E2F6.com-1 complex in G0 phase composed of E2F6, MGA, MAX, TFDP1, CBX3, BAT8, EUHMTASE1, RING1, RNF2, MBLR, L3MBTL2 and YAF2.

It is found in the nucleus. Functionally, binds to MYC and inhibits MYC-mediated transactivation. Also binds to MYCN and enhances MYCN-dependent transcriptional activation. Increases calpain 2-mediated proteolysis of YY1 in vitro. Component of the E2F6.com-1 complex, a repressive complex that methylates 'Lys-9' of histone H3, suggesting that it is involved in chromatin-remodeling. In Homo sapiens (Human), this protein is YY1-associated factor 2 (YAF2).